The primary structure comprises 401 residues: Mu-type opioid receptor (401 aa).

Residues 1–69 are Extracellular-facing; it reads MDSGAVPTNA…CPSAGSPSMI (69 aa). N-linked (GlcNAc...) asparagine glycans are attached at residues Asn9, Asn12, Asn34, Asn41, and Asn49. Residues 70–94 form a helical membrane-spanning segment; that stretch reads TAIIIMALYSIVCVVGLFGNFLVMY. Over 95 to 107 the chain is Cytoplasmic; sequence VIVRYTKMKTATN. A helical membrane pass occupies residues 108–132; it reads IYIFNLALADALATSTLPFQSVNYL. At 133-143 the chain is on the extracellular side; the sequence is MGTWPFGTILC. The cysteines at positions 143 and 220 are disulfide-linked. A helical membrane pass occupies residues 144-166; it reads KIVISIDYYNMFTSIFTLCTMSV. At 167–186 the chain is on the cytoplasmic side; it reads DRYIAVCHPVKALDLRTPRN. Tyr169 carries the phosphotyrosine modification. The helical transmembrane segment at 187 to 208 threads the bilayer; that stretch reads AKIINICNWILSSAIGLPVMFM. Topologically, residues 209-231 are extracellular; it reads ATTKYRQGSIDCTLTFSHPTWYW. The chain crosses the membrane as a helical span at residues 232-256; it reads ENLLKICVFIFAFIMPILIITVCYG. At 257 to 280 the chain is on the cytoplasmic side; that stretch reads LMILRLKSVRMLSGSKEKDRNLRR. Residues 281-307 traverse the membrane as a helical segment; it reads ITRMVLVVVAVFIVCWTPIHIYVIIKA. At 308–315 the chain is on the extracellular side; it reads LITIPETT. A helical transmembrane segment spans residues 316-339; it reads FQTVSWHFCIALGYTNSCLNPVLY. An NPxxY; plays a role in stabilizing the activated conformation of the receptor motif is present at residues 335–339; the sequence is NPVLY. The Cytoplasmic portion of the chain corresponds to 340 to 401; it reads AFLDENFKRC…NLEAETTPLP (62 aa). Cys354 carries S-palmitoyl cysteine lipidation. The disordered stretch occupies residues 365 to 389; it reads NSTRIRQNTRDHPSTANTVDRTNHQ. The residue at position 366 (Ser366) is a Phosphoserine. Thr373 is subject to Phosphothreonine. At Ser378 the chain carries Phosphoserine. Thr397 is subject to Phosphothreonine.

The protein belongs to the G-protein coupled receptor 1 family. Forms homooligomers and heterooligomers with other GPCRs, such as OPRD1, OPRK1, OPRL1, NPFFR2, ADRA2A, SSTR2, CNR1 and CCR5 (probably in dimeric forms). Interacts with heterotrimeric G proteins; interaction with a heterotrimeric complex containing GNAI1, GNB1 and GNG2 stabilizes the active conformation of the receptor and increases its affinity for endomorphin-2, the synthetic opioid peptide DAMGO and for morphinan agonists. Interacts with PPL; the interaction disrupts agonist-mediated G-protein activation. Interacts (via C-terminus) with DNAJB4 (via C-terminus). Interacts with calmodulin; the interaction inhibits the constitutive activity of OPRM1; it abolishes basal and attenuates agonist-stimulated G-protein coupling. Interacts with FLNA, PLD2, RANBP9 and WLS and GPM6A. Interacts with RTP4. Interacts with SYP and GNAS. Interacts with RGS9, RGS17, RGS20, RGS4, PPP1R9B and HINT1. Post-translationally, phosphorylated. Differentially phosphorylated in basal and agonist-induced conditions. Agonist-mediated phosphorylation modulates receptor internalization. Phosphorylated by GRK2 in a agonist-dependent manner. Phosphorylation at Tyr-169 requires receptor activation, is dependent on non-receptor protein tyrosine kinase Src and results in a decrease in agonist efficacy by reducing G-protein coupling efficiency. Phosphorylated on tyrosine residues; the phosphorylation is involved in agonist-induced G-protein-independent receptor down-regulation. Phosphorylation at Ser-378 is involved in G-protein-dependent but not beta-arrestin-dependent activation of the ERK pathway. In terms of processing, ubiquitinated. A basal ubiquitination seems not to be related to degradation. Ubiquitination is increased upon formation of OPRM1:OPRD1 oligomers leading to proteasomal degradation; the ubiquitination is diminished by RTP4.

It localises to the cell membrane. The protein resides in the cell projection. It is found in the axon. Its subcellular location is the perikaryon. The protein localises to the dendrite. It localises to the endosome. Its function is as follows. Receptor for endogenous opioids such as beta-endorphin and endomorphin. Receptor for natural and synthetic opioids including morphine, heroin, DAMGO, fentanyl, etorphine, buprenorphin and methadone. Also activated by enkephalin peptides, such as Met-enkephalin or Met-enkephalin-Arg-Phe, with higher affinity for Met-enkephalin-Arg-Phe. Agonist binding to the receptor induces coupling to an inactive GDP-bound heterotrimeric G-protein complex and subsequent exchange of GDP for GTP in the G-protein alpha subunit leading to dissociation of the G-protein complex with the free GTP-bound G-protein alpha and the G-protein beta-gamma dimer activating downstream cellular effectors. The agonist- and cell type-specific activity is predominantly coupled to pertussis toxin-sensitive G(i) and G(o) G alpha proteins, GNAI1, GNAI2, GNAI3 and GNAO1, and to a lesser extent to pertussis toxin-insensitive G alpha proteins GNAZ and GNA15. They mediate an array of downstream cellular responses, including inhibition of adenylate cyclase activity and both N-type and L-type calcium channels, activation of inward rectifying potassium channels, mitogen-activated protein kinase (MAPK), phospholipase C (PLC), phosphoinositide/protein kinase (PKC), phosphoinositide 3-kinase (PI3K) and regulation of NF-kappa-B. Also couples to adenylate cyclase stimulatory G alpha proteins. The selective temporal coupling to G-proteins and subsequent signaling can be regulated by RGSZ proteins, such as RGS9, RGS17 and RGS4. Phosphorylation by members of the GPRK subfamily of Ser/Thr protein kinases and association with beta-arrestins is involved in short-term receptor desensitization. Beta-arrestins associate with the GPRK-phosphorylated receptor and uncouple it from the G-protein thus terminating signal transduction. The phosphorylated receptor is internalized through endocytosis via clathrin-coated pits which involves beta-arrestins. The activation of the ERK pathway occurs either in a G-protein-dependent or a beta-arrestin-dependent manner and is regulated by agonist-specific receptor phosphorylation. Acts as a class A G-protein coupled receptor (GPCR) which dissociates from beta-arrestin at or near the plasma membrane and undergoes rapid recycling. Receptor down-regulation pathways are varying with the agonist and occur dependent or independent of G-protein coupling. Endogenous ligands induce rapid desensitization, endocytosis and recycling. Heterooligomerization with other GPCRs can modulate agonist binding, signaling and trafficking properties. Involved in neurogenesis. The polypeptide is Mu-type opioid receptor (OPRM1) (Bos taurus (Bovine)).